A 400-amino-acid polypeptide reads, in one-letter code: CinA-like protein (400 aa).

It belongs to the CinA family.

The polypeptide is CinA-like protein (Escherichia coli (strain K12 / MC4100 / BW2952)).